The following is a 357-amino-acid chain: Cobalt-precorrin-5B C(1)-methyltransferase (357 aa).

This sequence belongs to the CbiD family.

The catalysed reaction is Co-precorrin-5B + S-adenosyl-L-methionine = Co-precorrin-6A + S-adenosyl-L-homocysteine. The protein operates within cofactor biosynthesis; adenosylcobalamin biosynthesis; cob(II)yrinate a,c-diamide from sirohydrochlorin (anaerobic route): step 6/10. In terms of biological role, catalyzes the methylation of C-1 in cobalt-precorrin-5B to form cobalt-precorrin-6A. The sequence is that of Cobalt-precorrin-5B C(1)-methyltransferase from Alkaliphilus oremlandii (strain OhILAs) (Clostridium oremlandii (strain OhILAs)).